Reading from the N-terminus, the 550-residue chain is Aldehyde dehydrogenase family 3 member I1, chloroplastic (550 aa).

Residues 1–59 (MTKLLEINHIQTLCFAKGFSPARLNVATSPFRISRRGGGGYCSNACIPYRLKFTCYATL) constitute a chloroplast transit peptide. Residue 259–264 (GGARVA) coordinates NAD(+). The active-site Proton acceptor is glutamate 281. The active-site Nucleophile is the cysteine 316.

This sequence belongs to the aldehyde dehydrogenase family. Homodimer and homomultimer.

The protein resides in the plastid. It localises to the chloroplast. The enzyme catalyses an aldehyde + NAD(+) + H2O = a carboxylate + NADH + 2 H(+). Its activity is regulated as follows. Thiol-based regulation. Inactivation after dimerization under oxidizing conditions. Involved in oxidative stress tolerance by detoxifying reactive aldehydes derived from lipid peroxidation. Medium- to long-chain saturated aldehydes are preferred substrates, while the short-chain aldehyde propanal is a weak substrate. Can use both NAD(+) and NADP(+), but the coenzyme preference is substrate dependent. The chain is Aldehyde dehydrogenase family 3 member I1, chloroplastic (ALDH3I1) from Arabidopsis thaliana (Mouse-ear cress).